A 129-amino-acid chain; its full sequence is D-ribose pyranase (129 aa).

Histidine 20 acts as the Proton donor in catalysis. Substrate-binding positions include aspartate 28, histidine 96, and 118–120 (YAN).

Belongs to the RbsD / FucU family. RbsD subfamily. As to quaternary structure, homodecamer.

It is found in the cytoplasm. The enzyme catalyses beta-D-ribopyranose = beta-D-ribofuranose. It functions in the pathway carbohydrate metabolism; D-ribose degradation; D-ribose 5-phosphate from beta-D-ribopyranose: step 1/2. Its function is as follows. Catalyzes the interconversion of beta-pyran and beta-furan forms of D-ribose. This Streptomyces avermitilis (strain ATCC 31267 / DSM 46492 / JCM 5070 / NBRC 14893 / NCIMB 12804 / NRRL 8165 / MA-4680) protein is D-ribose pyranase.